The following is a 362-amino-acid chain: Putative glutamate--cysteine ligase 2-1 (362 aa).

Belongs to the glutamate--cysteine ligase type 2 family. YbdK subfamily.

It carries out the reaction L-cysteine + L-glutamate + ATP = gamma-L-glutamyl-L-cysteine + ADP + phosphate + H(+). In terms of biological role, ATP-dependent carboxylate-amine ligase which exhibits weak glutamate--cysteine ligase activity. This Streptomyces avermitilis (strain ATCC 31267 / DSM 46492 / JCM 5070 / NBRC 14893 / NCIMB 12804 / NRRL 8165 / MA-4680) protein is Putative glutamate--cysteine ligase 2-1.